Consider the following 662-residue polypeptide: Glutathione hydrolase 7 (662 aa).

The Cytoplasmic portion of the chain corresponds to 1-106 (MAAENEASQE…AAECSCRQDG (106 aa)). Serine 17, serine 72, serine 79, and serine 83 each carry phosphoserine. Residues 26 to 90 (SFPRLPEDEP…DGSPLRETRK (65 aa)) are disordered. Over residues 72 to 83 (SSSSEMGSQDGS) the composition is skewed to low complexity. The chain crosses the membrane as a helical; Signal-anchor for type II membrane protein span at residues 107–127 (LTVIVTACLTFATGVTVALVM). Over 128 to 662 (QIYFGDPQIF…SPDAAGATIL (535 aa)) the chain is Extracellular. Asparagine 198, asparagine 267, asparagine 283, asparagine 330, asparagine 353, asparagine 394, asparagine 452, asparagine 519, asparagine 523, and asparagine 586 each carry an N-linked (GlcNAc...) asparagine glycan.

The protein belongs to the gamma-glutamyltransferase family. In terms of assembly, interacts with TLCD3A. As to quaternary structure, heterodimer composed of the light and heavy chains. The active site is located in the light chain. In terms of processing, cleaved by autocatalysis into a large and a small subunit and the autocatalytic cleavage is essential to the functional activation of the enzyme. Widely expressed, but at low level, except in the airway epithelial cells. Detected in brain, heart, kidney, liver, lung, spleen, testis and trachea.

The protein resides in the membrane. It carries out the reaction an N-terminal (5-L-glutamyl)-[peptide] + an alpha-amino acid = 5-L-glutamyl amino acid + an N-terminal L-alpha-aminoacyl-[peptide]. It catalyses the reaction glutathione + H2O = L-cysteinylglycine + L-glutamate. The catalysed reaction is an S-substituted glutathione + H2O = an S-substituted L-cysteinylglycine + L-glutamate. It functions in the pathway sulfur metabolism; glutathione metabolism. Hydrolyzes and transfers gamma-glutamyl moieties from glutathione and other gamma-glutamyl compounds to acceptors. This is Glutathione hydrolase 7 from Homo sapiens (Human).